A 140-amino-acid chain; its full sequence is ATP synthase epsilon chain (140 aa).

This sequence belongs to the ATPase epsilon chain family. In terms of assembly, F-type ATPases have 2 components, CF(1) - the catalytic core - and CF(0) - the membrane proton channel. CF(1) has five subunits: alpha(3), beta(3), gamma(1), delta(1), epsilon(1). CF(0) has three main subunits: a, b and c.

It is found in the cell inner membrane. Functionally, produces ATP from ADP in the presence of a proton gradient across the membrane. The polypeptide is ATP synthase epsilon chain (Herminiimonas arsenicoxydans).